Reading from the N-terminus, the 429-residue chain is D-amino acid dehydrogenase (429 aa).

Residue 3 to 17 (VLILGSGVIGTTTAW) coordinates FAD.

The protein belongs to the DadA oxidoreductase family. It depends on FAD as a cofactor.

It carries out the reaction a D-alpha-amino acid + A + H2O = a 2-oxocarboxylate + AH2 + NH4(+). Its pathway is amino-acid degradation; D-alanine degradation; NH(3) and pyruvate from D-alanine: step 1/1. Functionally, oxidative deamination of D-amino acids. The protein is D-amino acid dehydrogenase of Xanthomonas campestris pv. campestris (strain 8004).